The sequence spans 283 residues: Pantothenate synthetase (283 aa).

30–37 is an ATP binding site; that stretch reads MGYLHDGH. Catalysis depends on histidine 37, which acts as the Proton donor. Glutamine 61 is a (R)-pantoate binding site. Glutamine 61 is a beta-alanine binding site. 148–151 serves as a coordination point for ATP; sequence GQKD. Glutamine 154 provides a ligand contact to (R)-pantoate. 185-188 is a binding site for ATP; that stretch reads MSSR.

The protein belongs to the pantothenate synthetase family. As to quaternary structure, homodimer.

The protein localises to the cytoplasm. The enzyme catalyses (R)-pantoate + beta-alanine + ATP = (R)-pantothenate + AMP + diphosphate + H(+). The protein operates within cofactor biosynthesis; (R)-pantothenate biosynthesis; (R)-pantothenate from (R)-pantoate and beta-alanine: step 1/1. Catalyzes the condensation of pantoate with beta-alanine in an ATP-dependent reaction via a pantoyl-adenylate intermediate. This Carboxydothermus hydrogenoformans (strain ATCC BAA-161 / DSM 6008 / Z-2901) protein is Pantothenate synthetase.